The sequence spans 362 residues: UDP-N-acetylglucosamine--N-acetylmuramyl-(pentapeptide) pyrophosphoryl-undecaprenol N-acetylglucosamine transferase (362 aa).

UDP-N-acetyl-alpha-D-glucosamine contacts are provided by arginine 166, serine 196, and glutamine 290.

Belongs to the glycosyltransferase 28 family. MurG subfamily.

It is found in the cell membrane. It carries out the reaction Mur2Ac(oyl-L-Ala-gamma-D-Glu-L-Lys-D-Ala-D-Ala)-di-trans,octa-cis-undecaprenyl diphosphate + UDP-N-acetyl-alpha-D-glucosamine = beta-D-GlcNAc-(1-&gt;4)-Mur2Ac(oyl-L-Ala-gamma-D-Glu-L-Lys-D-Ala-D-Ala)-di-trans,octa-cis-undecaprenyl diphosphate + UDP + H(+). It functions in the pathway cell wall biogenesis; peptidoglycan biosynthesis. Functionally, cell wall formation. Catalyzes the transfer of a GlcNAc subunit on undecaprenyl-pyrophosphoryl-MurNAc-pentapeptide (lipid intermediate I) to form undecaprenyl-pyrophosphoryl-MurNAc-(pentapeptide)GlcNAc (lipid intermediate II). The polypeptide is UDP-N-acetylglucosamine--N-acetylmuramyl-(pentapeptide) pyrophosphoryl-undecaprenol N-acetylglucosamine transferase (Staphylococcus carnosus (strain TM300)).